Consider the following 91-residue polypeptide: Methanol dehydrogenase [cytochrome c] subunit 2 (91 aa).

The signal sequence occupies residues 1–22 (MKHVLTLLALASVFAVSNQALA). A disulfide bridge links C28 with C34.

This sequence belongs to the methanol dehydrogenase subunit 2 family. In terms of assembly, heterotetramer composed of 2 alpha and 2 beta subunits.

It is found in the cell inner membrane. The catalysed reaction is 2 Fe(III)-[cytochrome cL] + a primary alcohol = 2 Fe(II)-[cytochrome cL] + an aldehyde + 2 H(+). In terms of biological role, catalyzes the oxidation of primary alcohols including methanol. The chain is Methanol dehydrogenase [cytochrome c] subunit 2 (moxI) from Methylophilus methylotrophus (Bacterium W3A1).